We begin with the raw amino-acid sequence, 215 residues long: Adenylate kinase (215 aa).

Position 10 to 15 (Gly10 to Thr15) interacts with ATP. The NMP stretch occupies residues Ser30–Val59. AMP contacts are provided by residues Thr31, Arg36, Leu57–Val59, Gly85–Arg88, and Gln92. The tract at residues Ser126 to Asp163 is LID. ATP is bound at residue Arg127. Zn(2+) is bound by residues Cys130 and Cys133. ATP is bound at residue Val136–Tyr137. Zn(2+) contacts are provided by Cys150 and Cys153. The AMP site is built by Arg160 and Arg171. Leu199 lines the ATP pocket.

It belongs to the adenylate kinase family. Monomer.

It localises to the cytoplasm. The catalysed reaction is AMP + ATP = 2 ADP. It participates in purine metabolism; AMP biosynthesis via salvage pathway; AMP from ADP: step 1/1. In terms of biological role, catalyzes the reversible transfer of the terminal phosphate group between ATP and AMP. Plays an important role in cellular energy homeostasis and in adenine nucleotide metabolism. The sequence is that of Adenylate kinase from Kosmotoga olearia (strain ATCC BAA-1733 / DSM 21960 / TBF 19.5.1).